A 486-amino-acid polypeptide reads, in one-letter code: 2-succinylbenzoate--CoA ligase (486 aa).

The protein belongs to the ATP-dependent AMP-binding enzyme family. MenE subfamily.

The enzyme catalyses 2-succinylbenzoate + ATP + CoA = 2-succinylbenzoyl-CoA + AMP + diphosphate. It functions in the pathway quinol/quinone metabolism; 1,4-dihydroxy-2-naphthoate biosynthesis; 1,4-dihydroxy-2-naphthoate from chorismate: step 5/7. Its pathway is quinol/quinone metabolism; menaquinone biosynthesis. Converts 2-succinylbenzoate (OSB) to 2-succinylbenzoyl-CoA (OSB-CoA). The polypeptide is 2-succinylbenzoate--CoA ligase (Bacillus pumilus (strain SAFR-032)).